The chain runs to 359 residues: Fructose-bisphosphate aldolase (359 aa).

Serine 50 provides a ligand contact to D-glyceraldehyde 3-phosphate. The active-site Proton donor is the aspartate 83. Zn(2+) is bound by residues histidine 84, aspartate 105, glutamate 142, and histidine 198. Glycine 199 is a binding site for dihydroxyacetone phosphate. Histidine 232 contributes to the Zn(2+) binding site. Dihydroxyacetone phosphate is bound by residues 233–235 (GSS) and 275–278 (NIDT).

This sequence belongs to the class II fructose-bisphosphate aldolase family. As to quaternary structure, homodimer. It depends on Zn(2+) as a cofactor.

The catalysed reaction is beta-D-fructose 1,6-bisphosphate = D-glyceraldehyde 3-phosphate + dihydroxyacetone phosphate. It functions in the pathway carbohydrate biosynthesis; Calvin cycle. It participates in carbohydrate degradation; glycolysis; D-glyceraldehyde 3-phosphate and glycerone phosphate from D-glucose: step 4/4. Catalyzes the aldol condensation of dihydroxyacetone phosphate (DHAP or glycerone-phosphate) with glyceraldehyde 3-phosphate (G3P) to form fructose 1,6-bisphosphate (FBP) in gluconeogenesis and the reverse reaction in glycolysis. The sequence is that of Fructose-bisphosphate aldolase (cbbA) from Rhizobium meliloti (strain 1021) (Ensifer meliloti).